The following is a 576-amino-acid chain: MQSNGTGQEQNHPANTQNGDANGLQSNAGSASGASGTGSGSLKKKKRLSQAEEDVIRLIGQHLHGLGLNQTVDLLMQESGCRLEHSSATKFRNHVMEGEWDKAENDLNELKALMHSPNAIVRMKFLLLQQKYLEYLEDGKVLEALQVLRGELTPLKYNTDRIHVLSGYLMCSHAEDLKAKAEWEGKGAGSRCRLLDKLQTYLPPSVMLPPRRLQTLLRQAVELQRDRCLYHNTKLDSSLDSVSLLLDHVCSRKQFPCYTQQILTEHCNEVWFCKFSNDGTKLATGSKDTTVIIWQVEPDTHQLKLLRTLEGHAYGVSYLAWSPDDVYLIACGPDDCSELWLWNVQTGELRTKMSQSHEDSLTSVAWNPDGKRFVTGGQRGQFYQCDLDGNLLESWEGVRVQCLWCMGDGRTVLASDTHQRIRGYSFEDLTDRNIVQEDHPIMSFTVSKNGRLALLNVATQGVHLWDLQDRVLVRKYQGVTQGFYTIHSCFGGHNEDFIASGSEDHKVYIWHKRSELPIVELTGHTRTVNCVSWNPCIPSLMASASDDGTVRIWGPAPFLDAQELDGLTESCSSMDS.

Residues 1-20 (MQSNGTGQEQNHPANTQNGD) show a composition bias toward polar residues. The tract at residues 1–46 (MQSNGTGQEQNHPANTQNGDANGLQSNAGSASGASGTGSGSLKKKK) is disordered. Positions 21–34 (ANGLQSNAGSASGA) are enriched in low complexity. At S49 the chain carries Phosphoserine. Residues 51-83 (AEEDVIRLIGQHLHGLGLNQTVDLLMQESGCRL) enclose the LisH domain. In terms of domain architecture, CTLH spans 84–143 (EHSSATKFRNHVMEGEWDKAENDLNELKALMHSPNAIVRMKFLLLQQKYLEYLEDGKVLE). WD repeat units follow at residues 265 to 304 (EHCNEVWFCKFSNDGTKLATGSKDTTVIIWQVEPDTHQLK), 311 to 350 (GHAYGVSYLAWSPDDVYLIACGPDDCSELWLWNVQTGELR), 356 to 396 (SHED…ESWE), 436 to 475 (QEDHPIMSFTVSKNGRLALLNVATQGVHLWDLQDRVLVRK), 478 to 520 (GVTQ…PIVE), and 523 to 563 (GHTR…DAQE).

Forms homooligomers. Identified in the CTLH complex that contains at least MAEA, RMND5A (or alternatively its paralog RMND5B), GID8, WDR26, and RANBP9 and/or RANBP10. Interacts with DDB1-CUL4A/B E3 ligase complexes.

Its subcellular location is the cytoplasm. It localises to the nucleus. The protein resides in the mitochondrion. G-beta-like protein involved in cell signal transduction. Acts as a negative regulator in MAPK signaling pathway. Functions as a scaffolding protein to promote G beta:gamma-mediated PLCB2 plasma membrane translocation and subsequent activation in leukocytes. Core component of the CTLH E3 ubiquitin-protein ligase complex that mediates ubiquitination and subsequent proteasomal degradation of target proteins. Acts as a negative regulator of the canonical Wnt signaling pathway through preventing ubiquitination of beta-catenin CTNNB1 by the beta-catenin destruction complex, thus negatively regulating CTNNB1 degradation. Serves as a scaffold to coordinate PI3K/AKT pathway-driven cell growth and migration. Protects cells from oxidative stress-induced apoptosis via the down-regulation of AP-1 transcriptional activity as well as by inhibiting cytochrome c release from mitochondria. Also protects cells by promoting hypoxia-mediated autophagy and mitophagy. This chain is WD repeat-containing protein 26 (wdr26), found in Danio rerio (Zebrafish).